The chain runs to 125 residues: Putative RNA polymerase sigma-G factor (125 aa).

This sequence belongs to the sigma-70 factor family.

Its function is as follows. Sigma factors are initiation factors that promote the attachment of RNA polymerase to specific initiation sites and are then released. The sequence is that of Putative RNA polymerase sigma-G factor from Bacillus thuringiensis subsp. kurstaki.